Here is a 173-residue protein sequence, read N- to C-terminus: MKRPEKEAVVAELTEQFRNASAVYLTEYRGLTVPQISDLREKLGRDTSYTVAKNTLFRIAAKEAGIEGLDEMLKGPSAVVFVDGDFIEAAKVLRDFAKTNKALIVKGGFADGTVYDAEGAKQLADLKSRPELLAELAGALKGTMSKAAYLFNALPTKVVRTIDALRDKQEKAA.

This sequence belongs to the universal ribosomal protein uL10 family. In terms of assembly, part of the ribosomal stalk of the 50S ribosomal subunit. The N-terminus interacts with L11 and the large rRNA to form the base of the stalk. The C-terminus forms an elongated spine to which L12 dimers bind in a sequential fashion forming a multimeric L10(L12)X complex.

Forms part of the ribosomal stalk, playing a central role in the interaction of the ribosome with GTP-bound translation factors. The sequence is that of Large ribosomal subunit protein uL10 from Bifidobacterium animalis subsp. lactis (strain AD011).